Reading from the N-terminus, the 921-residue chain is Isoleucine--tRNA ligase (921 aa).

The 'HIGH' region signature appears at 57–67 (PYANGDIHMGH). Glu-552 provides a ligand contact to L-isoleucyl-5'-AMP. Residues 593–597 (KMSKS) carry the 'KMSKS' region motif. Lys-596 serves as a coordination point for ATP. The Zn(2+) site is built by Cys-888, Cys-891, Cys-908, and Cys-911.

Belongs to the class-I aminoacyl-tRNA synthetase family. IleS type 1 subfamily. As to quaternary structure, monomer. Zn(2+) serves as cofactor.

It is found in the cytoplasm. The catalysed reaction is tRNA(Ile) + L-isoleucine + ATP = L-isoleucyl-tRNA(Ile) + AMP + diphosphate. Functionally, catalyzes the attachment of isoleucine to tRNA(Ile). As IleRS can inadvertently accommodate and process structurally similar amino acids such as valine, to avoid such errors it has two additional distinct tRNA(Ile)-dependent editing activities. One activity is designated as 'pretransfer' editing and involves the hydrolysis of activated Val-AMP. The other activity is designated 'posttransfer' editing and involves deacylation of mischarged Val-tRNA(Ile). The sequence is that of Isoleucine--tRNA ligase from Bacillus cereus (strain 03BB102).